A 620-amino-acid chain; its full sequence is FAD-linked oxidoreductase notD (620 aa).

The signal sequence occupies residues 1-21; that stretch reads MHYIRELLIVVFTSCPALSYA. N-linked (GlcNAc...) asparagine glycosylation is found at Asn-50, Asn-86, and Asn-109. An FAD-binding PCMH-type domain is found at 124–313; sequence SQGRIPRYSA…TSVTMPVFGA (190 aa). The N-linked (GlcNAc...) asparagine glycan is linked to Asn-403.

The protein belongs to the oxygen-dependent FAD-linked oxidoreductase family. FAD is required as a cofactor.

It participates in alkaloid biosynthesis. In terms of biological role, FAD-linked oxidoreductase; part of the gene cluster that mediates the biosynthesis of notoamide, a fungal indole alkaloid that belongs to a family of natural products containing a characteristic bicyclo[2.2.2]diazaoctane core. The first step of notoamide biosynthesis involves coupling of L-proline and L-tryptophan by the bimodular NRPS notE, to produce cyclo-L-tryptophan-L-proline called brevianamide F. The reverse prenyltransferase notF then acts as a deoxybrevianamide E synthase and converts brevianamide F to deoxybrevianamide E via reverse prenylation at C-2 of the indole ring leading to the bicyclo[2.2.2]diazaoctane core. Deoxybrevianamide E is further hydroxylated at C-6 of the indole ring, likely catalyzed by the cytochrome P450 monooxygenase notG, to yield 6-hydroxy-deoxybrevianamide E. 6-hydroxy-deoxybrevianamide E is a specific substrate of the prenyltransferase notC for normal prenylation at C-7 to produce 6-hydroxy-7-prenyl-deoxybrevianamide, also called notoamide S. As the proposed pivotal branching point in notoamide biosynthesis, notoamide S can be diverted to notoamide E through an oxidative pyran ring closure putatively catalyzed by either notH cytochrome P450 monooxygenase or the notD FAD-linked oxidoreductase. This step would be followed by an indole 2,3-epoxidation-initiated pinacol-like rearrangement catalyzed by the notB FAD-dependent monooxygenase leading to the formation of notoamide C and notoamide D. On the other hand notoamide S is converted to notoamide T by notH (or notD), a bifunctional oxidase that also functions as the intramolecular Diels-Alderase responsible for generation of (+)-notoamide T. To generate antipodal (-)-notoaminide T, notH' (or notD') in Aspergillus versicolor is expected to catalyze a Diels-Alder reaction leading to the opposite stereochemistry. The remaining oxidoreductase notD (or notH) likely catalyzes the oxidative pyran ring formation to yield (+)-stephacidin A. The FAD-dependent monooxygenase notI is highly similar to notB and is predicted to catalyze a similar conversion from (+)-stephacidin A to (-)-notoamide B via the 2,3-epoxidation of (+)-stephacidin A followed by a pinacol-type rearrangement. Finally, it remains unclear which enzyme could be responsible for the final hydroxylation steps leading to notoamide A and sclerotiamide. The polypeptide is FAD-linked oxidoreductase notD (Aspergillus sp. (strain MF297-2)).